The following is a 658-amino-acid chain: UvrABC system protein C (658 aa).

Residues 62–140 (PKPGVYRMLD…IKRFRPPYNV (79 aa)) enclose the GIY-YIG domain. The UVR domain occupies 250 to 285 (GAVQREIEAQMHKAAEDLDFERAAMLRDRLRAATFI).

It belongs to the UvrC family. In terms of assembly, interacts with UvrB in an incision complex.

The protein localises to the cytoplasm. The UvrABC repair system catalyzes the recognition and processing of DNA lesions. UvrC both incises the 5' and 3' sides of the lesion. The N-terminal half is responsible for the 3' incision and the C-terminal half is responsible for the 5' incision. This chain is UvrABC system protein C, found in Novosphingobium aromaticivorans (strain ATCC 700278 / DSM 12444 / CCUG 56034 / CIP 105152 / NBRC 16084 / F199).